The sequence spans 77 residues: Conotoxin ArMKLT2-022 (77 aa).

The N-terminal stretch at 1-22 is a signal peptide; the sequence is MKLTCVLIVAVLFLTACQLIAA. A propeptide spanning residues 23–46 is cleaved from the precursor; sequence DDSRDLKRFSRRKMRDGMLNTKNT. Position 49 is a pyrrolidone carboxylic acid (Q49). 3 disulfides stabilise this stretch: C50/C65, C57/C68, and C64/C73.

Belongs to the conotoxin O1 superfamily. Expressed by the venom duct.

It localises to the secreted. In Conus arenatus (Sand-dusted cone), this protein is Conotoxin ArMKLT2-022.